Reading from the N-terminus, the 294-residue chain is tRNA dimethylallyltransferase (294 aa).

ATP is bound at residue 10-17; sequence GPTAVGKT. Substrate is bound at residue 12–17; the sequence is TAVGKT. The interaction with substrate tRNA stretch occupies residues 35–38; it reads DSQQ.

This sequence belongs to the IPP transferase family. In terms of assembly, monomer. Mg(2+) is required as a cofactor.

The enzyme catalyses adenosine(37) in tRNA + dimethylallyl diphosphate = N(6)-dimethylallyladenosine(37) in tRNA + diphosphate. In terms of biological role, catalyzes the transfer of a dimethylallyl group onto the adenine at position 37 in tRNAs that read codons beginning with uridine, leading to the formation of N6-(dimethylallyl)adenosine (i(6)A). The polypeptide is tRNA dimethylallyltransferase (Streptococcus suis (strain 05ZYH33)).